A 772-amino-acid chain; its full sequence is Larval serum protein 1 gamma chain (772 aa).

An N-terminal signal peptide occupies residues 1–16; sequence MKLTLVILALVACVTA. N-linked (GlcNAc...) asparagine glycosylation occurs at Asn242.

Belongs to the hemocyanin family. In terms of assembly, heterohexamer, composed of three subunits, alpha, beta and gamma. Larval hemolymph.

The protein resides in the secreted. The protein localises to the extracellular space. Its function is as follows. Larval storage protein (LSP) which may serve as a store of amino acids for synthesis of adult proteins. In Drosophila melanogaster (Fruit fly), this protein is Larval serum protein 1 gamma chain (Lsp1gamma).